The primary structure comprises 1921 residues: Endoribonuclease Dicer (1921 aa).

The Helicase ATP-binding domain maps to 51–227; it reads LLEAALDHNT…ELEEKIKKLE (177 aa). 64–71 is an ATP binding site; the sequence is LNTGSGKT. The DECH box motif lies at 175–178; sequence DECH. The segment at 409–433 is disordered; the sequence is YVSWSDSEDDDEDEEIEEKEKPETN. Residues 414-425 are compositionally biased toward acidic residues; it reads DSEDDDEDEEIE. The Helicase C-terminal domain occupies 433-602; sequence NFPSPFTNIL…SVDTSETETE (170 aa). In terms of domain architecture, Dicer dsRNA-binding fold spans 630–722; it reads AIGHINRYCA…MPVGKETVKY (93 aa). The tract at residues 727–746 is disordered; sequence DLHDEEETSVPGRPGSTKRR. The PAZ domain maps to 895 to 1042; the sequence is KFMEDIEKSE…LVPELCAIHP (148 aa). Residues 1270-1289 are disordered; sequence NLSKDKVDSEKNTSSGYSSK. 2 consecutive RNase III domains span residues 1277–1404 and 1665–1823; these read DSEK…EETT and FENF…MDSG. E1317, D1396, E1399, and E1704 together coordinate Mg(2+). Positions 1782-1801 are disordered; that stretch reads QGMDSELRRSEEDEEKEEDI. Residues D1809 and E1812 each contribute to the Mg(2+) site. In terms of domain architecture, DRBM spans 1848–1913; sequence VPRSPVRELL…ARRALRSLKA (66 aa).

It belongs to the helicase family. Dicer subfamily. Component of the RISC loading complex (RLC), or micro-RNA (miRNA) loading complex (miRLC), which is composed of DICER1, AGO2 and TARBP2; DICER1 and TARBP2 are required to process precursor miRNAs (pre-miRNAs) to mature miRNAs and then load them onto AGO2. Note that the trimeric RLC/miRLC is also referred to as RISC. Requires Mg(2+) as cofactor. Mn(2+) is required as a cofactor.

It localises to the cytoplasm. It catalyses the reaction Endonucleolytic cleavage to 5'-phosphomonoester.. Its function is as follows. Double-stranded RNA (dsRNA) endoribonuclease playing a central role in short dsRNA-mediated post-transcriptional gene silencing. Cleaves naturally occurring long dsRNAs and short hairpin pre-microRNAs (miRNA) into fragments of twenty-one to twenty-three nucleotides with 3' overhang of two nucleotides, producing respectively short interfering RNAs (siRNA) and mature microRNAs. SiRNAs and miRNAs serve as guide to direct the RNA-induced silencing complex (RISC) to complementary RNAs to degrade them or prevent their translation. Gene silencing mediated by siRNAs, also called RNA interference, controls the elimination of transcripts from mobile and repetitive DNA elements of the genome but also the degradation of exogenous RNA of viral origin for instance. The miRNA pathway on the other side is a mean to specifically regulate the expression of target genes. The sequence is that of Endoribonuclease Dicer (DICER1) from Gallus gallus (Chicken).